The chain runs to 177 residues: Prorelaxin (177 aa).

The first 25 residues, 1-25 (MLRWFLSHLLGVWLLLSQLPREIPA), serve as a signal peptide directing secretion. Intrachain disulfides connect Cys34–Cys164, Cys46–Cys177, and Cys163–Cys168. A propeptide spans 63–149 (QISEPLAEVV…KSLSKLDKHP (87 aa)) (connecting peptide).

This sequence belongs to the insulin family. Heterodimer of a B chain and an A chain linked by two disulfide bonds. Placenta; syncytiotrophoblast.

The protein resides in the secreted. Functionally, relaxin is an ovarian hormone that acts with estrogen to produce dilatation of the birth canal in many mammals. This Canis lupus familiaris (Dog) protein is Prorelaxin (RLN).